The chain runs to 147 residues: Lysozyme C, intestinal isozyme (147 aa).

Positions 1–18 (MKAVLILGLLLLSVTVQG) are cleaved as a signal peptide. A C-type lysozyme domain is found at 19–147 (KKFEKCELAR…VSSYIRGCKL (129 aa)). 4 cysteine pairs are disulfide-bonded: Cys24–Cys145, Cys48–Cys133, Cys83–Cys99, and Cys95–Cys113. Residues Glu53 and Asp71 contribute to the active site.

The protein belongs to the glycosyl hydrolase 22 family.

It carries out the reaction Hydrolysis of (1-&gt;4)-beta-linkages between N-acetylmuramic acid and N-acetyl-D-glucosamine residues in a peptidoglycan and between N-acetyl-D-glucosamine residues in chitodextrins.. Its function is as follows. Lysozymes have primarily a bacteriolytic function; those in tissues and body fluids are associated with the monocyte-macrophage system and enhance the activity of immunoagents. This Bos taurus (Bovine) protein is Lysozyme C, intestinal isozyme.